A 592-amino-acid chain; its full sequence is V-type ATP synthase alpha chain (592 aa).

232–239 (GPFGAGKT) contacts ATP.

The protein belongs to the ATPase alpha/beta chains family.

The catalysed reaction is ATP + H2O + 4 H(+)(in) = ADP + phosphate + 5 H(+)(out). Produces ATP from ADP in the presence of a proton gradient across the membrane. The V-type alpha chain is a catalytic subunit. This is V-type ATP synthase alpha chain from Clostridium botulinum (strain Alaska E43 / Type E3).